The sequence spans 309 residues: Probable copper-dependent oxygenase clz3 (309 aa).

N-linked (GlcNAc...) asparagine glycosylation is found at Asn9 and Asn249. Residues 257–277 (FAVPLAAIAFIALIISGGYVI) traverse the membrane as a helical segment.

It belongs to the clz3 oxygenase family.

The protein localises to the membrane. It participates in secondary metabolite biosynthesis. In terms of biological role, probable copper-dependent oxygenase; part of the gene cluster that mediates the biosynthesis of squalestatin S1 (SQS1, also known as zaragozic acid A), a heavily oxidized fungal polyketide that offers potent cholesterol lowering activity by targeting squalene synthase (SS). SQS1 is composed of a 2,8-dioxobicyclic[3.2.1]octane-3,4,5-tricarboxyclic acid core that is connected to two lipophilic polyketide arms. These initial steps feature the priming of an unusual benzoic acid starter unit onto the highly reducing polyketide synthase clz14, followed by oxaloacetate extension and product release to generate a tricarboxylic acid containing product. The phenylalanine ammonia lyase (PAL) clz10 and the acyl-CoA ligase clz12 are involved in transforming phenylalanine into benzoyl-CoA. The citrate synthase-like protein clz17 is involved in connecting the C-alpha-carbons of the hexaketide chain and oxaloacetate to afford the tricarboxylic acid unit. The potential hydrolytic enzymes, clz11 and clz13, are in close proximity to pks2 and may participate in product release. On the other side, the tetraketide arm is synthesized by a the squalestatin tetraketide synthase clz2 and enzymatically esterified to the core in the last biosynthetic step, by the acetyltransferase clz6. The biosynthesis of the tetraketide must involve 3 rounds of chain extension. After the first and second rounds methyl-transfer occurs, and in all rounds of extension the ketoreductase and dehydratase are active. The enoyl reductase and C-MeT of clz2 are not active in the final round of extension. The acetyltransferase clz6 appears to have a broad substrate selectivity for its acyl CoA substrate, allowing the in vitro synthesis of novel squalestatins. The biosynthesis of SQS1 requires several oxidative steps likely performed by oxidoreductases clz3, clz15 and clz16. Finally, in support of the identification of the cluster as being responsible for SQS1 production, the cluster contains a gene encoding a putative squalene synthase (SS) clz20, suggesting a likely mechanism for self-resistance. This is Probable copper-dependent oxygenase clz3 from Cochliobolus lunatus (Filamentous fungus).